Reading from the N-terminus, the 442-residue chain is UPF0489 protein C5orf22 (442 aa).

The disordered stretch occupies residues Ser-175–Arg-210. Polar residues predominate over residues Asn-189–Glu-200.

Belongs to the UPF0489 family.

In Homo sapiens (Human), this protein is UPF0489 protein C5orf22 (C5orf22).